The primary structure comprises 201 residues: Lymphotoxin-alpha (201 aa).

An N-terminal signal peptide occupies residues 1–27 (MTSSGVLCLLGALSLQVLLLQPPGAQG). The tract at residues 23–52 (PGAQGAPNPDNSHSSSPAPPQTAQHLSQKS) is disordered. The segment covering 31-51 (PDNSHSSSPAPPQTAQHLSQK) has biased composition (polar residues). Residues 60–201 (PAAHLVGDPS…SSVFFGAFAL (142 aa)) form the THD domain. The N-linked (GlcNAc...) asparagine glycan is linked to Asn93. A disulfide bond links Cys117 and Cys152.

Belongs to the tumor necrosis factor family. In terms of assembly, homotrimer, and heterotrimer of either two LTB and one LTA subunits or (less prevalent) two LTA and one LTB subunits. Interacts with TNFRSF14.

It localises to the secreted. Its subcellular location is the membrane. Cytokine that in its homotrimeric form binds to TNFRSF1A/TNFR1, TNFRSF1B/TNFBR and TNFRSF14/HVEM. In its heterotrimeric form with LTB binds to TNFRSF3/LTBR. Lymphotoxin is produced by lymphocytes and is cytotoxic for a wide range of tumor cells in vitro and in vivo. This chain is Lymphotoxin-alpha (LTA), found in Notamacropus eugenii (Tammar wallaby).